The sequence spans 352 residues: Protein RecA (352 aa).

67 to 74 (GPESSGKT) contributes to the ATP binding site.

Belongs to the RecA family.

It localises to the cytoplasm. Can catalyze the hydrolysis of ATP in the presence of single-stranded DNA, the ATP-dependent uptake of single-stranded DNA by duplex DNA, and the ATP-dependent hybridization of homologous single-stranded DNAs. It interacts with LexA causing its activation and leading to its autocatalytic cleavage. The sequence is that of Protein RecA from Klebsiella pneumoniae subsp. pneumoniae (strain ATCC 700721 / MGH 78578).